The following is a 351-amino-acid chain: Ribosomal RNA large subunit methyltransferase M (351 aa).

S-adenosyl-L-methionine-binding positions include Ser-186, 219–222 (APGG), Asp-238, Asp-258, and Asp-274. Residue Lys-303 is the Proton acceptor of the active site.

Belongs to the class I-like SAM-binding methyltransferase superfamily. RNA methyltransferase RlmE family. RlmM subfamily. As to quaternary structure, monomer.

It localises to the cytoplasm. The enzyme catalyses cytidine(2498) in 23S rRNA + S-adenosyl-L-methionine = 2'-O-methylcytidine(2498) in 23S rRNA + S-adenosyl-L-homocysteine + H(+). Functionally, catalyzes the 2'-O-methylation at nucleotide C2498 in 23S rRNA. The chain is Ribosomal RNA large subunit methyltransferase M from Xylella fastidiosa (strain M23).